The following is a 212-amino-acid chain: MEKDTGTTHRRHRPGLRALPSGVALGHLKAASEASELQRSRSLGGLQPEGDPPSRPRKPHKELESEDQGKDPSSNAEDASCQKNLAQDKKESFSTLGKLGHESGKQDPEREKSDLEASMQEVQEGEHADGGLQEAKEQEAESIKLNDLQEEEKASVFVEIDLGDHAEEVVTDAKKEEKPSQMDVEDLSEDEMQTSWVCCIPYSTRKRAKEST.

Disordered regions lie at residues 1–148 (MEKD…LNDL) and 168–190 (EVVTDAKKEEKPSQMDVEDLSED). Basic and acidic residues predominate over residues 61–70 (KELESEDQGK). The span at 71–85 (DPSSNAEDASCQKNL) shows a compositional bias: polar residues. 3 stretches are compositionally biased toward basic and acidic residues: residues 99 to 115 (LGHESGKQDPEREKSDL), 124 to 144 (EGEHADGGLQEAKEQEAESIK), and 168 to 180 (EVVTDAKKEEKPS).

This is an uncharacterized protein from Homo sapiens (Human).